Consider the following 222-residue polypeptide: Probable septum site-determining protein MinC (222 aa).

The protein belongs to the MinC family. As to quaternary structure, interacts with MinD and FtsZ.

Functionally, cell division inhibitor that blocks the formation of polar Z ring septums. Rapidly oscillates between the poles of the cell to destabilize FtsZ filaments that have formed before they mature into polar Z rings. Prevents FtsZ polymerization. In Lysinibacillus sphaericus (strain C3-41), this protein is Probable septum site-determining protein MinC.